Here is a 283-residue protein sequence, read N- to C-terminus: Thymidylate synthase (283 aa).

A dUMP-binding site is contributed by R22. C160 acts as the Nucleophile in catalysis. Residues 180-183, N191, and 221-223 contribute to the dUMP site; these read RSCD and HIY. D183 contacts (6R)-5,10-methylene-5,6,7,8-tetrahydrofolate. S282 lines the (6R)-5,10-methylene-5,6,7,8-tetrahydrofolate pocket.

This sequence belongs to the thymidylate synthase family. Bacterial-type ThyA subfamily. Homodimer.

The protein resides in the cytoplasm. It carries out the reaction dUMP + (6R)-5,10-methylene-5,6,7,8-tetrahydrofolate = 7,8-dihydrofolate + dTMP. It participates in pyrimidine metabolism; dTTP biosynthesis. Its function is as follows. Catalyzes the reductive methylation of 2'-deoxyuridine-5'-monophosphate (dUMP) to 2'-deoxythymidine-5'-monophosphate (dTMP) while utilizing 5,10-methylenetetrahydrofolate (mTHF) as the methyl donor and reductant in the reaction, yielding dihydrofolate (DHF) as a by-product. This enzymatic reaction provides an intracellular de novo source of dTMP, an essential precursor for DNA biosynthesis. The polypeptide is Thymidylate synthase (Vibrio vulnificus (strain CMCP6)).